The following is a 118-amino-acid chain: RNA guanine-N7 methyltransferase activating subunit (118 aa).

Residue T2 is modified to N-acetylthreonine. The interval 2 to 55 is interaction with RNMT; it reads TDTAEAVPNFEEMFASRFTENDKEYQEYLKRPPESPPIVEEWNSRAGGNQRNRG. The tract at residues 30 to 118 is disordered; sequence LKRPPESPPI…YNQRPPYGYY (89 aa). S36 bears the Phosphoserine mark. The RNMT-activating domain motif lies at 36-42; the sequence is SPPIVEE. The segment covering 45–56 has biased composition (low complexity); that stretch reads SRAGGNQRNRGN. Residues 56–118 are RNA-binding; the sequence is NRLQDNRQFR…YNQRPPYGYY (63 aa). Positions 57-70 are enriched in basic and acidic residues; sequence RLQDNRQFRGRDNR. Residues 76 to 93 are compositionally biased toward polar residues; that stretch reads DNRSNQWHGRSWGNNYPQ. Omega-N-methylarginine is present on R85. S86 is subject to Phosphoserine. Over residues 98-109 the composition is skewed to low complexity; it reads PYYPQQYGHYGY.

The protein belongs to the RAM family. In terms of assembly, interacts with RNMT; this interaction enhances mRNA binding and cap methyltransferase activity.

The protein resides in the nucleus. Regulatory subunit of the mRNA-capping methyltransferase RNMT:RAMAC complex that methylates the N7 position of the added guanosine to the 5'-cap structure of mRNAs. Promotes the recruitment of the methyl donor, S-adenosyl-L-methionine, to RNMT. Regulates RNMT expression by a post-transcriptional stabilizing mechanism. Binds RNA. In Pongo abelii (Sumatran orangutan), this protein is RNA guanine-N7 methyltransferase activating subunit (RAMAC).